Reading from the N-terminus, the 208-residue chain is Outer-membrane lipoprotein carrier protein (208 aa).

The first 21 residues, 1–21, serve as a signal peptide directing secretion; it reads MPAFRYLIVLPLLCWGFASQA.

This sequence belongs to the LolA family. As to quaternary structure, monomer.

It localises to the periplasm. Functionally, participates in the translocation of lipoproteins from the inner membrane to the outer membrane. Only forms a complex with a lipoprotein if the residue after the N-terminal Cys is not an aspartate (The Asp acts as a targeting signal to indicate that the lipoprotein should stay in the inner membrane). The chain is Outer-membrane lipoprotein carrier protein from Methylococcus capsulatus (strain ATCC 33009 / NCIMB 11132 / Bath).